The primary structure comprises 33 residues: U23-ctenitoxin-Pn1a (33 aa).

3 cysteine pairs are disulfide-bonded: Cys3/Cys16, Cys10/Cys21, and Cys15/Cys30.

As to expression, expressed by the venom gland.

It localises to the secreted. Functionally, non-toxic to mice. The chain is U23-ctenitoxin-Pn1a from Phoneutria nigriventer (Brazilian armed spider).